The chain runs to 334 residues: Beta-ketoacyl-[acyl-carrier-protein] synthase III (334 aa).

Catalysis depends on residues C114 and H253. The ACP-binding stretch occupies residues 254–258; that stretch reads QANIR. The active site involves N283.

The protein belongs to the thiolase-like superfamily. FabH family. As to quaternary structure, homodimer.

The protein resides in the cytoplasm. The enzyme catalyses malonyl-[ACP] + acetyl-CoA + H(+) = 3-oxobutanoyl-[ACP] + CO2 + CoA. Its pathway is lipid metabolism; fatty acid biosynthesis. Functionally, catalyzes the condensation reaction of fatty acid synthesis by the addition to an acyl acceptor of two carbons from malonyl-ACP. Catalyzes the first condensation reaction which initiates fatty acid synthesis and may therefore play a role in governing the total rate of fatty acid production. Possesses both acetoacetyl-ACP synthase and acetyl transacylase activities. Its substrate specificity determines the biosynthesis of branched-chain and/or straight-chain of fatty acids. In Campylobacter concisus (strain 13826), this protein is Beta-ketoacyl-[acyl-carrier-protein] synthase III.